The sequence spans 286 residues: Deleted in azoospermia-like-A (286 aa).

An RRM domain is found at 33 to 114 (NTVFVGGIDI…PAIRKICTYV (82 aa)). The 26-residue stretch at 155–180 (ACPYPSSPPMAIQQIPVGCQQPGYFQ) folds into the DAZ domain.

Belongs to the RRM DAZ family. As to quaternary structure, interacts with the C-terminus of pabp1 and with epabp. Prior to oocyte maturation, found in a complex with epabp and pum2 proteins and spdy1 mRNA; pum2 dissociates from the complex during maturation. Germ-line specific. Oocyte mRNA expression is first restricted to the granulo-fibrillar material (GFM) of the mitochondrial cloud and then to the oocyte germ plasm at the vegetal cortex. Remains an mRNA component of the germ plasm until the neurula stage. In 2-8 cell embryos, expressed in the germ plasm matrix between germinal granules and mitochondria. Expressed in primordial germ cells (PGCs) later in embryogenesis. In addition to the ovaries of adult females, expressed in the testis of adult and juvenile males in spermatogonia and spermatocytes. The protein is restricted to the embryonic germ plasm and primordial germ cells.

The protein resides in the cytoplasm. RNA-binding protein that is required for primordial germ cell (PGC) differentiation and indirectly necessary for the migration of PGCs through the endoderm. May promote meiotic cell division during spermatogenesis. Shows a preference for G- and U-rich RNAs and probably binds the 3'-UTR of target mRNAs. Stimulates the initiation of translation of mRNAs through the recruitment of poly(A)-binding proteins (PABPs). This is Deleted in azoospermia-like-A (dazl-a) from Xenopus laevis (African clawed frog).